The chain runs to 40 residues: Photosystem II reaction center protein J (40 aa).

A helical transmembrane segment spans residues 10–30 (LWLIGTVAGILVIGLVGIFFY).

Belongs to the PsbJ family. PSII is composed of 1 copy each of membrane proteins PsbA, PsbB, PsbC, PsbD, PsbE, PsbF, PsbH, PsbI, PsbJ, PsbK, PsbL, PsbM, PsbT, PsbX, PsbY, PsbZ, Psb30/Ycf12, at least 3 peripheral proteins of the oxygen-evolving complex and a large number of cofactors. It forms dimeric complexes.

It is found in the plastid. Its subcellular location is the chloroplast thylakoid membrane. One of the components of the core complex of photosystem II (PSII). PSII is a light-driven water:plastoquinone oxidoreductase that uses light energy to abstract electrons from H(2)O, generating O(2) and a proton gradient subsequently used for ATP formation. It consists of a core antenna complex that captures photons, and an electron transfer chain that converts photonic excitation into a charge separation. This chain is Photosystem II reaction center protein J, found in Marchantia polymorpha (Common liverwort).